The primary structure comprises 354 residues: Protein-glutamate methylesterase/protein-glutamine glutaminase 2 (354 aa).

Residues R5–E122 enclose the Response regulatory domain. D56 is modified (4-aspartylphosphate). Positions P159–R354 constitute a CheB-type methylesterase domain. Catalysis depends on residues S172, H199, and D298.

It belongs to the CheB family. In terms of processing, phosphorylated by CheA. Phosphorylation of the N-terminal regulatory domain activates the methylesterase activity.

Its subcellular location is the cytoplasm. The catalysed reaction is [protein]-L-glutamate 5-O-methyl ester + H2O = L-glutamyl-[protein] + methanol + H(+). It carries out the reaction L-glutaminyl-[protein] + H2O = L-glutamyl-[protein] + NH4(+). Involved in chemotaxis. Part of a chemotaxis signal transduction system that modulates chemotaxis in response to various stimuli. Catalyzes the demethylation of specific methylglutamate residues introduced into the chemoreceptors (methyl-accepting chemotaxis proteins or MCP) by CheR. Also mediates the irreversible deamidation of specific glutamine residues to glutamic acid. The chain is Protein-glutamate methylesterase/protein-glutamine glutaminase 2 from Carboxydothermus hydrogenoformans (strain ATCC BAA-161 / DSM 6008 / Z-2901).